The sequence spans 180 residues: MILSDGGIKSYLRRGLMKIEPFDENQVRENGVDLTIGHQYARFKNTEDVLDVTKEEDLSKYYELGFMDDEGIVIKPYEHVLLHTREYIEMPADLVGLVNLKSSFARLGLYIPPTVVDAGFKGEIVIEIIGSSFPVRVRPGVPFIHLVFLRTDSPVLRDYSVRGHYQGQRGIRLPKLPIKL.

DCTP is bound by residues 101-106 (KSSFAR) and Asp-117. Glu-127 acts as the Proton donor/acceptor in catalysis. DCTP is bound by residues Tyr-159 and Gln-168.

This sequence belongs to the dCTP deaminase family. Homotrimer.

The catalysed reaction is dCTP + H2O + H(+) = dUTP + NH4(+). Its pathway is pyrimidine metabolism; dUMP biosynthesis; dUMP from dCTP (dUTP route): step 1/2. Functionally, catalyzes the deamination of dCTP to dUTP. This chain is dCTP deaminase, found in Ignicoccus hospitalis (strain KIN4/I / DSM 18386 / JCM 14125).